A 101-amino-acid chain; its full sequence is Urease subunit beta (101 aa).

This sequence belongs to the urease beta subunit family. As to quaternary structure, heterotrimer of UreA (gamma), UreB (beta) and UreC (alpha) subunits. Three heterotrimers associate to form the active enzyme.

It is found in the cytoplasm. The catalysed reaction is urea + 2 H2O + H(+) = hydrogencarbonate + 2 NH4(+). It participates in nitrogen metabolism; urea degradation; CO(2) and NH(3) from urea (urease route): step 1/1. The chain is Urease subunit beta from Azoarcus sp. (strain BH72).